The following is a 113-amino-acid chain: uncharacterized protein (113 aa).

The chain crosses the membrane as a helical span at residues phenylalanine 7 to cysteine 29.

The protein localises to the membrane. This is an uncharacterized protein from Aquifex aeolicus (strain VF5).